The chain runs to 573 residues: Urease subunit alpha (573 aa).

In terms of domain architecture, Urease spans 136–573 (GAIDCHVHFI…LPMAQRYFLF (438 aa)). Ni(2+) is bound by residues His141, His143, and Lys224. Lys224 carries the N6-carboxylysine modification. His226 lines the substrate pocket. Positions 253 and 279 each coordinate Ni(2+). His327 (proton donor) is an active-site residue. Asp367 lines the Ni(2+) pocket.

Belongs to the metallo-dependent hydrolases superfamily. Urease alpha subunit family. Heterotrimer of UreA (gamma), UreB (beta) and UreC (alpha) subunits. Three heterotrimers associate to form the active enzyme. Ni cation serves as cofactor. Carboxylation allows a single lysine to coordinate two nickel ions.

It is found in the cytoplasm. The catalysed reaction is urea + 2 H2O + H(+) = hydrogencarbonate + 2 NH4(+). Its pathway is nitrogen metabolism; urea degradation; CO(2) and NH(3) from urea (urease route): step 1/1. This Nocardia farcinica (strain IFM 10152) protein is Urease subunit alpha.